Reading from the N-terminus, the 299-residue chain is Tyrosine recombinase XerC (299 aa).

The region spanning 1–85 is the Core-binding (CB) domain; it reads MERQLDAYCE…AVRGLYHYLN (85 aa). Residues 106–285 enclose the Tyr recombinase domain; it reads RLPKTLDTDR…DFQHLATVYD (180 aa). Catalysis depends on residues Arg-146, Lys-170, His-237, Arg-240, and His-263. The active-site O-(3'-phospho-DNA)-tyrosine intermediate is Tyr-272.

The protein belongs to the 'phage' integrase family. XerC subfamily. In terms of assembly, forms a cyclic heterotetrameric complex composed of two molecules of XerC and two molecules of XerD.

It localises to the cytoplasm. In terms of biological role, site-specific tyrosine recombinase, which acts by catalyzing the cutting and rejoining of the recombining DNA molecules. The XerC-XerD complex is essential to convert dimers of the bacterial chromosome into monomers to permit their segregation at cell division. It also contributes to the segregational stability of plasmids. This chain is Tyrosine recombinase XerC, found in Pseudomonas fluorescens.